We begin with the raw amino-acid sequence, 95 residues long: Large ribosomal subunit protein bL27 (95 aa).

Residues 1 to 12 (MLLIKKINLQFF) constitute a propeptide that is removed on maturation. Residues 17 to 37 (GVGSTKNGRDSNPKYLGAKKS) are disordered.

Belongs to the bacterial ribosomal protein bL27 family. The N-terminus is cleaved by ribosomal processing cysteine protease Prp.

This is Large ribosomal subunit protein bL27 from Malacoplasma penetrans (strain HF-2) (Mycoplasma penetrans).